Consider the following 274-residue polypeptide: Leucine-rich repeat-containing protein 10 (274 aa).

LRR repeat units follow at residues 30–51, 52–74, 76–97, 98–120, 121–143, 145–166, 167–189, and 191–213; these read LDRM…VCSF, TELV…LAQL, NLQI…VCTL, KQLC…LSLL, QNLR…VCEL, LLKT…LRRL, RELR…LLRM, and FLEV…HLTN. The disordered stretch occupies residues 236-274; the sequence is RVGRWAEETPEPDPRKARRYALAKEENQEPPPPLLPSSS. The span at 239 to 250 shows a compositional bias: basic and acidic residues; it reads RWAEETPEPDPR. Residues 264-274 show a composition bias toward pro residues; that stretch reads EPPPPLLPSSS.

In terms of tissue distribution, detected specifically in the heart.

Its subcellular location is the nucleus. Functionally, may play important roles in cardiac development and/or cardiac function. The polypeptide is Leucine-rich repeat-containing protein 10 (Lrrc10) (Mus musculus (Mouse)).